The primary structure comprises 303 residues: Glucosyl-3-phosphoglycerate synthase (303 aa).

UDP-alpha-D-glucose-binding positions include 35–39 (PALNE), Ser-66, Lys-99, and 119–120 (DS). Residue Asp-121 participates in Mn(2+) binding. 166–169 (GRVT) contacts (2R)-3-phosphoglycerate. UDP-alpha-D-glucose contacts are provided by residues 211–214 (YGVE) and 238–243 (RAHRNR). His-240 contacts Mn(2+). Asn-242 lines the (2R)-3-phosphoglycerate pocket.

It belongs to the glycosyltransferase 2 family. As to quaternary structure, homotrimer. The cofactor is Mg(2+). It depends on Mn(2+) as a cofactor.

It catalyses the reaction an NDP-alpha-D-glucose + (2R)-3-phosphoglycerate = (2R)-2-O-(alpha-D-glucopyranosyl)-3-phospho-glycerate + a ribonucleoside 5'-diphosphate + H(+). The catalysed reaction is (2R)-3-phosphoglycerate + UDP-alpha-D-glucose = (2R)-2-O-(alpha-D-glucopyranosyl)-3-phospho-glycerate + UDP + H(+). It carries out the reaction ADP-alpha-D-glucose + (2R)-3-phosphoglycerate = (2R)-2-O-(alpha-D-glucopyranosyl)-3-phospho-glycerate + ADP + H(+). The enzyme catalyses GDP-D-glucose + (2R)-3-phosphoglycerate = (2R)-2-O-(alpha-D-glucopyranosyl)-3-phospho-glycerate + GDP + H(+). Functionally, involved in the biosynthesis of 6-O-methylglucose lipopolysaccarides (MGLPs). Catalyzes the transfer of the glucose moiety from a nuleotide sugar such as UDP-alpha-D-glucose to the position 2 of 3-phospho-D-glycerate (3-PGA) to form glucosyl-3-phosphoglycerate (GPG). It can use UDP-glucose, ADP-glucose and GDP-glucose as sugar donor substrates with decreasing affinity and with 3-PGA as an acceptor. D-glycerate can only be an acceptor with ADP-glucose and at a very low rate. In Mycolicibacterium smegmatis (strain ATCC 700084 / mc(2)155) (Mycobacterium smegmatis), this protein is Glucosyl-3-phosphoglycerate synthase (gpgS).